A 163-amino-acid polypeptide reads, in one-letter code: Lipoprotein signal peptidase (163 aa).

4 consecutive transmembrane segments (helical) span residues Val-5–Leu-25, Ile-37–Leu-57, Leu-67–Ser-87, and Leu-91–Tyr-111. Catalysis depends on residues Asp-121 and Asp-139. The chain crosses the membrane as a helical span at residues Trp-132 to Tyr-152.

It belongs to the peptidase A8 family.

The protein resides in the cell inner membrane. The catalysed reaction is Release of signal peptides from bacterial membrane prolipoproteins. Hydrolyzes -Xaa-Yaa-Zaa-|-(S,diacylglyceryl)Cys-, in which Xaa is hydrophobic (preferably Leu), and Yaa (Ala or Ser) and Zaa (Gly or Ala) have small, neutral side chains.. Its pathway is protein modification; lipoprotein biosynthesis (signal peptide cleavage). Its function is as follows. This protein specifically catalyzes the removal of signal peptides from prolipoproteins. In Sulfurihydrogenibium sp. (strain YO3AOP1), this protein is Lipoprotein signal peptidase.